We begin with the raw amino-acid sequence, 564 residues long: Nucleolus and neural progenitor protein (564 aa).

The segment at 431-495 (GSRTSTSEHP…KRRCSGTVQR (65 aa)) is disordered. The segment covering 442–459 (RQRRSKYKVLSRQRKPQR) has biased composition (basic residues). Residues 442-460 (RQRRSKYKVLSRQRKPQRK) are nuclear localization signal. Polar residues predominate over residues 460-473 (KLQSTLLKETQQVP).

The protein belongs to the nepro family.

It localises to the nucleus. The protein resides in the nucleolus. Functionally, may play a role in cortex development as part of the Notch signaling pathway. Downstream of Notch may repress the expression of proneural genes and inhibit neuronal differentiation thereby maintaining neural progenitors. May also play a role in preimplentation embryo development. In Mus musculus (Mouse), this protein is Nucleolus and neural progenitor protein.